The following is a 330-amino-acid chain: Tryptophan--tRNA ligase (330 aa).

ATP contacts are provided by residues 10-12 (QAT) and 18-19 (GN). The 'HIGH' region signature appears at 11-19 (ATGSLHLGN). Aspartate 134 is a binding site for L-tryptophan. Residues 146–148 (GED), isoleucine 186, and 195–199 (KMSKS) contribute to the ATP site. The short motif at 195–199 (KMSKS) is the 'KMSKS' region element.

This sequence belongs to the class-I aminoacyl-tRNA synthetase family. As to quaternary structure, homodimer.

The protein resides in the cytoplasm. It carries out the reaction tRNA(Trp) + L-tryptophan + ATP = L-tryptophyl-tRNA(Trp) + AMP + diphosphate + H(+). In terms of biological role, catalyzes the attachment of tryptophan to tRNA(Trp). This chain is Tryptophan--tRNA ligase, found in Rickettsia felis (strain ATCC VR-1525 / URRWXCal2) (Rickettsia azadi).